Consider the following 187-residue polypeptide: Accessory gene regulator protein B (187 aa).

5 helical membrane passes run 49 to 69, 82 to 102, 107 to 127, 143 to 163, and 164 to 184; these read IAYI…FYLI, FWCY…VLHF, TLMM…APAA, YFSI…KEPY, and TQFI…IYYS.

This sequence belongs to the AgrB family.

It is found in the cell membrane. Functionally, essential for the production of a quorum sensing system signal molecule, the autoinducing peptide (AIP). This quorum sensing system is responsible for the regulation of the expression of virulence factor genes. Involved in the proteolytic processing of AgrD, the precursor of AIP. The polypeptide is Accessory gene regulator protein B (Staphylococcus aureus (strain MW2)).